Reading from the N-terminus, the 625-residue chain is Keratin, type II cytoskeletal 1 (625 aa).

Residues 1 to 12 are compositionally biased toward low complexity; that stretch reads MSFQCSSRSLCR. Residues 1-27 form a disordered region; the sequence is MSFQCSSRSLCRSGGGGGGRNFSSGSA. Positions 1–178 are head; it reads MSFQCSSRSL…DPQIQKVKSQ (178 aa). R12 carries the omega-N-methylarginine modification. Phosphoserine is present on residues S23 and S26. At R51 the chain carries Omega-N-methylarginine. The residue at position 69 (S69) is a Phosphoserine. A coiled-coil region spans residues 171-319; the sequence is QIQKVKSQER…DIDFFSTLYQ (149 aa). Residues 179–214 form a coil 1A region; that stretch reads EREQIKSLNDKFASFIDKVRFLEQQNQVLQTKWELL. An IF rod domain is found at 179 to 492; the sequence is EREQIKSLND…KLLEGEEIRM (314 aa). A linker 1 region spans residues 215-233; the sequence is QQVDTSTRTQNLDPFFESY. The interval 234–325 is coil 1B; it reads ISNLRRQVDS…TLYQMELSQM (92 aa). Residue K275 is modified to N6,N6-dimethyllysine. Residues 326-349 are linker 12; it reads QTQISETNVVLSMDNNRTLDLDGI. The tract at residues 350–488 is coil 2; that stretch reads IAEVKAQYDS…ATYRKLLEGE (139 aa). Residues 388-475 are a coiled coil; sequence DSVKNTKMEI…ELMNTKLALD (88 aa). The segment at 489–625 is tail; it reads EIRMSGECTP…VSTTYSRGTN (137 aa). Disordered stretches follow at residues 496–525 and 560–625; these read CTPNVSVSVSTSHTSMSGTSSRGGGRYGSG and SGGG…RGTN. Residues 500–515 show a composition bias toward low complexity; the sequence is VSVSVSTSHTSMSGTS. Gly residues-rich tracts occupy residues 516–525 and 560–606; these read SRGGGRYGSG and SGGG…GGVK. Omega-N-methylarginine is present on residues R517, R574, and R596. Residues 613–625 show a composition bias toward polar residues; that stretch reads VKFVSTTYSRGTN.

It belongs to the intermediate filament family. In terms of assembly, heterotetramer of two type I and two type II keratins. Heterodimer with KRT10. Two heterodimers of KRT1 and KRT10 form a heterotetramer. Forms a heterodimer with KRT14; the interaction is more abundant in the absence of KRT5. Interacts with ITGB1 in the presence of RACK1 and SRC, and with RACK1. Interacts with C1QBP; the association represents a cell surface kininogen receptor. Interacts with EPPK1; interaction is dependent of higher-order structure of intermediate filament. Undergoes deimination of some arginine residues (citrullination).

The protein resides in the cell membrane. The protein localises to the cytoplasm. In terms of biological role, may regulate the activity of kinases such as PKC and SRC via binding to integrin beta-1 (ITB1) and the receptor of activated protein C kinase 1 (RACK1). In complex with C1QBP is a high affinity receptor for kininogen-1/HMWK. The chain is Keratin, type II cytoskeletal 1 from Rattus norvegicus (Rat).